Consider the following 224-residue polypeptide: uncharacterized protein (224 aa).

6 helical membrane-spanning segments follow: residues 25-45 (MMLALAIITSLISEFISIPFF), 54-74 (ISVVFLVACAFFVSLGWSLTI), 91-111 (IGVLTVTLANLSTILFTRLYF), 119-139 (FCWIFVFLFTTLSNALLLTTL), 142-162 (ILITPLFWYYFGYVQTPNFLI), and 174-194 (HFFFFGINNYWLGIFCLYSFF).

The protein resides in the cell membrane. This is an uncharacterized protein from Mycoplasma genitalium (strain ATCC 33530 / DSM 19775 / NCTC 10195 / G37) (Mycoplasmoides genitalium).